The chain runs to 180 residues: Large ribosomal subunit protein uL5 (180 aa).

Belongs to the universal ribosomal protein uL5 family. In terms of assembly, part of the 50S ribosomal subunit; part of the 5S rRNA/L5/L18/L25 subcomplex. Contacts the 5S rRNA and the P site tRNA. Forms a bridge to the 30S subunit in the 70S ribosome.

In terms of biological role, this is one of the proteins that bind and probably mediate the attachment of the 5S RNA into the large ribosomal subunit, where it forms part of the central protuberance. In the 70S ribosome it contacts protein S13 of the 30S subunit (bridge B1b), connecting the 2 subunits; this bridge is implicated in subunit movement. Contacts the P site tRNA; the 5S rRNA and some of its associated proteins might help stabilize positioning of ribosome-bound tRNAs. The sequence is that of Large ribosomal subunit protein uL5 from Streptococcus pyogenes serotype M49 (strain NZ131).